A 137-amino-acid polypeptide reads, in one-letter code: Putative pre-16S rRNA nuclease (137 aa).

Belongs to the YqgF nuclease family.

The protein localises to the cytoplasm. Its function is as follows. Could be a nuclease involved in processing of the 5'-end of pre-16S rRNA. The protein is Putative pre-16S rRNA nuclease of Oceanobacillus iheyensis (strain DSM 14371 / CIP 107618 / JCM 11309 / KCTC 3954 / HTE831).